The sequence spans 253 residues: Demethylmenaquinone methyltransferase (253 aa).

S-adenosyl-L-methionine is bound by residues Thr75, Asp96, and 124-125; that span reads DA.

It belongs to the class I-like SAM-binding methyltransferase superfamily. MenG/UbiE family.

It carries out the reaction a 2-demethylmenaquinol + S-adenosyl-L-methionine = a menaquinol + S-adenosyl-L-homocysteine + H(+). It functions in the pathway quinol/quinone metabolism; menaquinone biosynthesis; menaquinol from 1,4-dihydroxy-2-naphthoate: step 2/2. Its function is as follows. Methyltransferase required for the conversion of demethylmenaquinol (DMKH2) to menaquinol (MKH2). This Desulfitobacterium hafniense (strain Y51) protein is Demethylmenaquinone methyltransferase.